The primary structure comprises 549 residues: Protein wntless homolog (549 aa).

Positions 1-34 (MAGGAVIENLSNRKLFVIFAGLLVIQIMFFLIGA) are cleaved as a signal peptide. Over 36-236 (YAPSPSSYME…RLIEIHQNGG (201 aa)) the chain is Lumenal. The chain crosses the membrane as a helical span at residues 237–257 (FTLVWLWTKTFMTPVVAICLW). Over 258–275 (WYYNRINQLARNPLLLER) the chain is Cytoplasmic. A helical transmembrane segment spans residues 276-296 (AILLLGLSLVILDFPIEWISL). Residues 297–310 (TYRIPFLLLISDLR) lie on the Lumenal side of the membrane. The chain crosses the membrane as a helical span at residues 311 to 331 (QGLFYTVLFSFWLIFAGEHLI). Over 332-345 (DDNTRNNLKSYRFN) the chain is Cytoplasmic. A helical transmembrane segment spans residues 346-366 (LSFIITASLGLLIYDLIERGI). The Lumenal portion of the chain corresponds to 367 to 383 (QLYDPFYSVWSSPTGSQ). The helical transmembrane segment at 384-404 (IAYFAIFISAISTVAYFIFLF) threads the bilayer. Residues 405 to 439 (FKIARVWSTIKSKRSAQIYQTSENRRLKVEGVIYR) are Cytoplasmic-facing. Residues 440 to 460 (FKFLMLFTLLCSAFTIAAYFM) form a helical membrane-spanning segment. Over 461-483 (KQYGEAQLHGDEARDGFLTGSTS) the chain is Lumenal. The chain crosses the membrane as a helical span at residues 484–504 (AFFTGAFGMCNIYVLLLLAMY). Residues 505–549 (APSHKHYRGASQLIDENDDDEIMEDPSNQHTESNAMTTFLKPSTD) lie on the Cytoplasmic side of the membrane. Residues 524–549 (DEIMEDPSNQHTESNAMTTFLKPSTD) are disordered. The span at 530-549 (PSNQHTESNAMTTFLKPSTD) shows a compositional bias: polar residues.

This sequence belongs to the wntless family. In terms of tissue distribution, expressed in the tail hypodermis, stomatointestinal muscle, the mesoblast cell M and its descendants, CAN neurons, the developing vulva, the pharynx and the pharyngeal intestinal valve.

It is found in the cell membrane. Its subcellular location is the early endosome membrane. The protein resides in the golgi apparatus membrane. It localises to the basal cell membrane. The protein localises to the late endosome membrane. Probable sorting receptor which regulates endocytosis and secretion of the wnt ligand egl-20. Recycling of mig-14 from the plasma membrane to the Golgi apparatus by the retromer complex is essential for its function. Its endosomal trafficking is regulated by its association with sorting nexin snx-3 on early endosomes and the mtm-6/mtm-9 myotubularin complex. Required in embryonic development for endoderm specification and the correct positioning and orientation of the mitotic spindles and division planes in blastomere cells. Functions during vulval development, playing a role in vulval precursor cell fate specification. During development, specifically regulates the migration of HSN neurons, the left Q neuroblast (QL) and its descendants and the distal tip cells of the gonads. Positioning of Q neuroblasts may be both dependent and independent of hox gene mab-5. Involved in establishing ALM and PLM neuronal cell polarity. In Caenorhabditis elegans, this protein is Protein wntless homolog.